Consider the following 249-residue polypeptide: Cytochrome c oxidase subunit 2 (249 aa).

The next 2 membrane-spanning stretches (helical) occupy residues 40 to 60 (NIMF…YTIT) and 81 to 101 (IIWT…SFIL). 6 residues coordinate Cu cation: His-184, Cys-219, Glu-221, Cys-223, His-227, and Met-230. A Mg(2+)-binding site is contributed by Glu-221.

The protein belongs to the cytochrome c oxidase subunit 2 family. Component of the cytochrome c oxidase (complex IV, CIV), a multisubunit enzyme composed of a catalytic core of 3 subunits and several supernumerary subunits. The complex exists as a monomer or a dimer and forms supercomplexes (SCs) in the inner mitochondrial membrane with ubiquinol-cytochrome c oxidoreductase (cytochrome b-c1 complex, complex III, CIII). It depends on Cu cation as a cofactor.

The protein localises to the mitochondrion inner membrane. The enzyme catalyses 4 Fe(II)-[cytochrome c] + O2 + 8 H(+)(in) = 4 Fe(III)-[cytochrome c] + 2 H2O + 4 H(+)(out). In terms of biological role, component of the cytochrome c oxidase, the last enzyme in the mitochondrial electron transport chain which drives oxidative phosphorylation. The respiratory chain contains 3 multisubunit complexes succinate dehydrogenase (complex II, CII), ubiquinol-cytochrome c oxidoreductase (cytochrome b-c1 complex, complex III, CIII) and cytochrome c oxidase (complex IV, CIV), that cooperate to transfer electrons derived from NADH and succinate to molecular oxygen, creating an electrochemical gradient over the inner membrane that drives transmembrane transport and the ATP synthase. Cytochrome c oxidase is the component of the respiratory chain that catalyzes the reduction of oxygen to water. Electrons originating from reduced cytochrome c in the intermembrane space (IMS) are transferred via the dinuclear copper A center (CU(A)) of subunit 2 and heme A of subunit 1 to the active site in subunit 1, a binuclear center (BNC) formed by heme A3 and copper B (CU(B)). The BNC reduces molecular oxygen to 2 water molecules using 4 electrons from cytochrome c in the IMS and 4 protons from the mitochondrial matrix. In Vanderwaltozyma polyspora (strain ATCC 22028 / DSM 70294 / BCRC 21397 / CBS 2163 / NBRC 10782 / NRRL Y-8283 / UCD 57-17) (Kluyveromyces polysporus), this protein is Cytochrome c oxidase subunit 2 (COX2).